The sequence spans 625 residues: Probable potassium transport system protein Kup 2 (625 aa).

Transmembrane regions (helical) follow at residues 15–35 (LSFA…LYAF), 52–72 (ILSL…LVIV), 98–118 (GGWL…DGML), 134–154 (LSPN…FFLF), 164–184 (IGVY…ILGF), 212–232 (FALF…ALFA), 246–266 (WFAV…AFVL), 284–304 (FLPV…QAII), 336–356 (VYLP…VVIF), 365–385 (AYGI…GIIA), 394–414 (FKIL…AGNI), and 417–437 (LLTG…VMYT).

Belongs to the HAK/KUP transporter (TC 2.A.72) family.

Its subcellular location is the cell inner membrane. It catalyses the reaction K(+)(in) + H(+)(in) = K(+)(out) + H(+)(out). In terms of biological role, transport of potassium into the cell. Likely operates as a K(+):H(+) symporter. The polypeptide is Probable potassium transport system protein Kup 2 (Legionella pneumophila (strain Paris)).